The primary structure comprises 347 residues: Transcription factor EC (347 aa).

The interval 1 to 119 is necessary for transcriptional transactivation; it reads MTLDHQIINP…GLTSASCPSS (119 aa). Positions 139–192 constitute a bHLH domain; sequence QKKDNHNLIERRRRYNINYRIKELGTLIPKSNDPDMRWNKGTILKASVEYIKWL. Residues 271–347 form a necessary for transcriptional transactivation region; it reads PSPEFCDQAI…SFSSDDGDEL (77 aa). The tract at residues 319 to 347 is disordered; the sequence is DPLLSATSPAVSKESSRRSSFSSDDGDEL. Residues 326 to 341 are compositionally biased toward low complexity; it reads SPAVSKESSRRSSFSS.

Belongs to the MiT/TFE family. Homodimer. Forms heterodimers with MITF and TFE3. Interacts with MITF.

Its subcellular location is the nucleus. In terms of biological role, transcriptional regulator that acts as a repressor or an activator. Acts as a transcriptional repressor on minimal promoter containing element F (that includes an E-box sequence). Binds to element F in an E-box sequence-specific manner. Acts as a transcriptional transactivator on the proximal promoter region of the tartrate-resistant acid phosphatase (TRAP) E-box containing promoter. Collaborates with MITF in target gene activation. Acts as a transcriptional repressor on minimal promoter containing mu E3 enhancer sequence. Binds to mu E3 DNA sequence of the immunoglobulin heavy-chain gene enhancer. Binds DNA in a homo- or heterodimeric form. The protein is Transcription factor EC (TFEC) of Pan troglodytes (Chimpanzee).